The sequence spans 194 residues: Outer-membrane lipoprotein LolB (194 aa).

The N-terminal stretch at 1 to 18 (MKLLQHLTLIFCLLILTA) is a signal peptide. Cysteine 19 is lipidated: N-palmitoyl cysteine. A lipid anchor (S-diacylglycerol cysteine) is attached at cysteine 19.

This sequence belongs to the LolB family. In terms of assembly, monomer.

The protein localises to the cell outer membrane. Functionally, plays a critical role in the incorporation of lipoproteins in the outer membrane after they are released by the LolA protein. This Tolumonas auensis (strain DSM 9187 / NBRC 110442 / TA 4) protein is Outer-membrane lipoprotein LolB.